A 487-amino-acid chain; its full sequence is Zinc finger protein 345 (487 aa).

15 consecutive C2H2-type zinc fingers follow at residues L62 to H84, Y90 to H112, Y118 to H140, Y146 to H168, Y174 to H196, Y202 to H224, Y230 to H252, Y258 to H280, Y286 to H308, Y314 to H336, Y342 to H364, Y370 to H392, Y398 to H420, Y426 to H448, and Y454 to H476.

The protein belongs to the krueppel C2H2-type zinc-finger protein family.

The protein localises to the nucleus. Functionally, may be involved in transcriptional regulation. This chain is Zinc finger protein 345 (ZNF345), found in Bos taurus (Bovine).